The following is a 571-amino-acid chain: Septation ring formation regulator EzrA (571 aa).

The Extracellular portion of the chain corresponds to 1 to 3 (MYY). Residues 4 to 22 (MLIGFIIVVIAIISAGYIL) traverse the membrane as a helical segment. The Cytoplasmic portion of the chain corresponds to 23-571 (KRKHYQRINE…ESKVSVDDIE (549 aa)). Coiled coils occupy residues 169–214 (VETK…AQME), 249–298 (AQME…DTLE), 326–374 (DALA…ASGE), 400–438 (KFAEELRSLRKDELEARDDAERMRRAIVTLDRKMERERL), and 474–529 (TQDW…ENHF).

Belongs to the EzrA family.

The protein localises to the cell membrane. In terms of biological role, negative regulator of FtsZ ring formation; modulates the frequency and position of FtsZ ring formation. Inhibits FtsZ ring formation at polar sites. Interacts either with FtsZ or with one of its binding partners to promote depolymerization. This is Septation ring formation regulator EzrA from Listeria welshimeri serovar 6b (strain ATCC 35897 / DSM 20650 / CCUG 15529 / CIP 8149 / NCTC 11857 / SLCC 5334 / V8).